Here is a 351-residue protein sequence, read N- to C-terminus: Uroporphyrinogen decarboxylase (351 aa).

Substrate is bound by residues 25-29 (RQAGR), Asp74, Tyr151, Ser206, and His325.

It belongs to the uroporphyrinogen decarboxylase family. In terms of assembly, homodimer.

It is found in the cytoplasm. It carries out the reaction uroporphyrinogen III + 4 H(+) = coproporphyrinogen III + 4 CO2. The protein operates within porphyrin-containing compound metabolism; protoporphyrin-IX biosynthesis; coproporphyrinogen-III from 5-aminolevulinate: step 4/4. Its function is as follows. Catalyzes the decarboxylation of four acetate groups of uroporphyrinogen-III to yield coproporphyrinogen-III. The protein is Uroporphyrinogen decarboxylase of Chlorobium phaeobacteroides (strain BS1).